The primary structure comprises 119 residues: Large ribosomal subunit protein uL18 (119 aa).

The protein belongs to the universal ribosomal protein uL18 family. As to quaternary structure, part of the 50S ribosomal subunit; part of the 5S rRNA/L5/L18/L25 subcomplex. Contacts the 5S and 23S rRNAs.

Functionally, this is one of the proteins that bind and probably mediate the attachment of the 5S RNA into the large ribosomal subunit, where it forms part of the central protuberance. This is Large ribosomal subunit protein uL18 from Xanthomonas oryzae pv. oryzae (strain MAFF 311018).